The sequence spans 455 residues: MAEERSYFGTDGIRGRVGEAPITPDFVLRLGWAAGRVLAGEGQRKVVIGKDTRLSGYMFESALEAGFAAAGVHSLMLGPMPTPAIAYLTRTLHARAGVVISASHNPHHDNGIKFFGPDGYKLDDATEEAIERLLQDGPPQMVRCEELGRATRINDAVGRYIEFCKGSVQRQIDLRGLRVVVDCAHGATYQAAPAVLAELGADVVVIGNEPDGLNINVDHGSQHPERLCQRVVEASADVGVAFDGDGDRVIMVDRYGRVIDGDGLLYIIATARVARGQVRGAVVGTQMTNLGLEVALQELGLVLERTRVGDRYVLERLLQVGGTLGGESSGHIICLDRTTTGDGLISALQVLEAMVTTGRPLDELVAGMHYYPQRLVNVPVSRGPDVIRLPAVTEAVEEAEHQLGDHGRVLLRPSGTEPLLRVMVEGADEGQVNRLADWLAVTVETAARGAATDPI.

The active-site Phosphoserine intermediate is serine 103. 4 residues coordinate Mg(2+): serine 103, aspartate 243, aspartate 245, and aspartate 247. Serine 103 is modified (phosphoserine).

Belongs to the phosphohexose mutase family. Mg(2+) is required as a cofactor. Post-translationally, activated by phosphorylation.

The catalysed reaction is alpha-D-glucosamine 1-phosphate = D-glucosamine 6-phosphate. Its function is as follows. Catalyzes the conversion of glucosamine-6-phosphate to glucosamine-1-phosphate. In Halorhodospira halophila (strain DSM 244 / SL1) (Ectothiorhodospira halophila (strain DSM 244 / SL1)), this protein is Phosphoglucosamine mutase.